The primary structure comprises 270 residues: Energy-coupling factor transporter ATP-binding protein EcfA (270 aa).

Positions valine 5–alanine 238 constitute an ABC transporter domain. Residue glycine 38–serine 45 participates in ATP binding.

It belongs to the ABC transporter superfamily. Energy-coupling factor EcfA family. Forms a stable energy-coupling factor (ECF) transporter complex composed of 2 membrane-embedded substrate-binding proteins (S component), 2 ATP-binding proteins (A component) and 2 transmembrane proteins (T component).

Its subcellular location is the cell membrane. Its function is as follows. ATP-binding (A) component of a common energy-coupling factor (ECF) ABC-transporter complex. Unlike classic ABC transporters this ECF transporter provides the energy necessary to transport a number of different substrates. This chain is Energy-coupling factor transporter ATP-binding protein EcfA, found in Carboxydothermus hydrogenoformans (strain ATCC BAA-161 / DSM 6008 / Z-2901).